The following is a 496-amino-acid chain: Putative (R)-citramalate synthase CimA (496 aa).

In terms of domain architecture, Pyruvate carboxyltransferase spans 3–253 (VRVLDTTLRD…DTSINIEMLY (251 aa)).

It belongs to the alpha-IPM synthase/homocitrate synthase family. As to quaternary structure, homodimer.

It carries out the reaction pyruvate + acetyl-CoA + H2O = (3R)-citramalate + CoA + H(+). It functions in the pathway amino-acid biosynthesis; L-isoleucine biosynthesis; 2-oxobutanoate from pyruvate: step 1/3. Catalyzes the condensation of pyruvate and acetyl-coenzyme A to form (R)-citramalate. In Methanothermobacter thermautotrophicus (strain ATCC 29096 / DSM 1053 / JCM 10044 / NBRC 100330 / Delta H) (Methanobacterium thermoautotrophicum), this protein is Putative (R)-citramalate synthase CimA.